The chain runs to 151 residues: tRNA-specific adenosine deaminase (151 aa).

The 119-residue stretch at 4-122 (NRDSYWMKIA…PFLKKIFINL (119 aa)) folds into the CMP/dCMP-type deaminase domain. Zn(2+) is bound at residue His55. Glu57 serves as the catalytic Proton donor. Residues Cys85 and Cys88 each coordinate Zn(2+).

It belongs to the cytidine and deoxycytidylate deaminase family. In terms of assembly, homodimer. Zn(2+) serves as cofactor.

It catalyses the reaction adenosine(34) in tRNA + H2O + H(+) = inosine(34) in tRNA + NH4(+). Functionally, catalyzes the deamination of adenosine to inosine at the wobble position 34 of tRNA(Arg2). The polypeptide is tRNA-specific adenosine deaminase (Buchnera aphidicola subsp. Schizaphis graminum (strain Sg)).